The sequence spans 346 residues: Low specificity L-threonine aldolase (346 aa).

Lysine 207 bears the N6-(pyridoxal phosphate)lysine mark.

Belongs to the threonine aldolase family. Homotetramer. It depends on pyridoxal 5'-phosphate as a cofactor.

The enzyme catalyses L-threonine = acetaldehyde + glycine. The catalysed reaction is L-allo-threonine = acetaldehyde + glycine. In terms of biological role, catalyzes the cleavage of L-allo-threonine and L-threonine to glycine and acetaldehyde. This chain is Low specificity L-threonine aldolase (ltaE), found in Pseudomonas aeruginosa (strain ATCC 15692 / DSM 22644 / CIP 104116 / JCM 14847 / LMG 12228 / 1C / PRS 101 / PAO1).